The sequence spans 209 residues: Type III pantothenate kinase (209 aa).

5 to 12 contributes to the ATP binding site; the sequence is DIGNSNAN. Substrate-binding positions include Y68 and 72–75; that span reads GIDR. Catalysis depends on D74, which acts as the Proton acceptor. D89 serves as a coordination point for K(+). S92 serves as a coordination point for ATP. Residue T144 coordinates substrate.

It belongs to the type III pantothenate kinase family. As to quaternary structure, homodimer. NH4(+) serves as cofactor. It depends on K(+) as a cofactor.

The protein resides in the cytoplasm. It carries out the reaction (R)-pantothenate + ATP = (R)-4'-phosphopantothenate + ADP + H(+). Its pathway is cofactor biosynthesis; coenzyme A biosynthesis; CoA from (R)-pantothenate: step 1/5. In terms of biological role, catalyzes the phosphorylation of pantothenate (Pan), the first step in CoA biosynthesis. This is Type III pantothenate kinase from Campylobacter jejuni subsp. jejuni serotype O:2 (strain ATCC 700819 / NCTC 11168).